The sequence spans 129 residues: Allergen Bra j 1-E (129 aa).

Positions K28–P47 are disordered. Low complexity predominate over residues Q32–P47.

Belongs to the 2S seed storage albumins family. In terms of assembly, the mature protein consists of a small and a large chain linked by two disulfide bonds.

This is a 2S seed storage protein. The sequence is that of Allergen Bra j 1-E from Brassica juncea (Indian mustard).